The primary structure comprises 147 residues: MKLPAYIDMPFQEWKTSFSFFNKVSVRFSETDMFGHMNNVTPFIYFEEVRISYFKKLNMMSENKQTMTVVASQQCDYLRQVMPYEELRIYVKTSAVGSSSLTLHYLGENLEGEPCFTGAVVMVQVSKESGKAVSWTDEEKETLLHTR.

This is an uncharacterized protein from Bacillus subtilis (strain 168).